The following is a 99-amino-acid chain: UPF0125 protein PM0166 (99 aa).

This sequence belongs to the UPF0125 (RnfH) family.

The sequence is that of UPF0125 protein PM0166 from Pasteurella multocida (strain Pm70).